The following is a 157-amino-acid chain: SsrA-binding protein (157 aa).

The tract at residues 133 to 157 is disordered; sequence LHDKRESEKKRDWGREKGRLLRARG. A compositionally biased stretch (basic and acidic residues) spans 135–151; that stretch reads DKRESEKKRDWGREKGR.

Belongs to the SmpB family.

The protein localises to the cytoplasm. In terms of biological role, required for rescue of stalled ribosomes mediated by trans-translation. Binds to transfer-messenger RNA (tmRNA), required for stable association of tmRNA with ribosomes. tmRNA and SmpB together mimic tRNA shape, replacing the anticodon stem-loop with SmpB. tmRNA is encoded by the ssrA gene; the 2 termini fold to resemble tRNA(Ala) and it encodes a 'tag peptide', a short internal open reading frame. During trans-translation Ala-aminoacylated tmRNA acts like a tRNA, entering the A-site of stalled ribosomes, displacing the stalled mRNA. The ribosome then switches to translate the ORF on the tmRNA; the nascent peptide is terminated with the 'tag peptide' encoded by the tmRNA and targeted for degradation. The ribosome is freed to recommence translation, which seems to be the essential function of trans-translation. This is SsrA-binding protein from Nitrobacter winogradskyi (strain ATCC 25391 / DSM 10237 / CIP 104748 / NCIMB 11846 / Nb-255).